The sequence spans 305 residues: Oligopeptide transport ATP-binding protein OppF (305 aa).

Positions 6–251 (LEIKHLKQHF…PLHPYTKSLL (246 aa)) constitute an ABC transporter domain. Residue 42-49 (GESGCGKS) participates in ATP binding.

The protein belongs to the ABC transporter superfamily. In terms of assembly, the complex is composed of two ATP-binding proteins (OppD and OppF), two transmembrane proteins (OppB and OppC) and a solute-binding protein (OppA).

Its subcellular location is the cell membrane. It catalyses the reaction a [peptide](out) + ATP + H2O = a [peptide](in) + ADP + phosphate + H(+). Its function is as follows. Part of the ABC transporter complex OppABCDF involved in the uptake of oligopeptides. Probably responsible for energy coupling to the transport system. Required for genetic competence but not for peptide transport or for sporulation. The chain is Oligopeptide transport ATP-binding protein OppF from Bacillus subtilis (strain 168).